A 330-amino-acid chain; its full sequence is uncharacterized protein (330 aa).

The region spanning 4–242 (LSIQNLVVEY…AGEVLFEQST (239 aa)) is the ABC transporter domain. 40-47 (GPSGCGKT) contacts ATP. An a nucleoside 3',5'-cyclic phosphate-binding site is contributed by 210 to 330 (DRVVELTPDF…LIEHRALAND (121 aa)).

This sequence belongs to the ABC transporter superfamily. As to quaternary structure, the complex is composed of two ATP-binding proteins (MT0079), two transmembrane proteins (MT0078) and a solute-binding protein.

In terms of biological role, probably part of an ABC transporter complex. Probably responsible for energy coupling to the transport system. This is an uncharacterized protein from Mycobacterium tuberculosis (strain CDC 1551 / Oshkosh).